Reading from the N-terminus, the 584-residue chain is Membrane protein insertase YidC (584 aa).

5 helical membrane passes run 5–25, 358–378, 428–448, 478–498, and 516–536; these read SVIGLVLISLIMIVWMQFMAP, FIGNYGLIIIIFAFLIKLVTY, LGGCLPVVLQMPLLFAMFYVF, IPLYGDHIALFPILMAVAVFL, and IYIFPVMMLLFFNNMPAGLGL. Positions 563–584 are disordered; the sequence is ALSPVVAAPPKAPKKKKNARKR. Positions 574–584 are enriched in basic residues; the sequence is APKKKKNARKR.

It belongs to the OXA1/ALB3/YidC family. Type 1 subfamily. Interacts with the Sec translocase complex via SecD. Specifically interacts with transmembrane segments of nascent integral membrane proteins during membrane integration.

It localises to the cell inner membrane. Its function is as follows. Required for the insertion and/or proper folding and/or complex formation of integral membrane proteins into the membrane. Involved in integration of membrane proteins that insert both dependently and independently of the Sec translocase complex, as well as at least some lipoproteins. Aids folding of multispanning membrane proteins. The protein is Membrane protein insertase YidC of Prosthecochloris aestuarii (strain DSM 271 / SK 413).